A 182-amino-acid polypeptide reads, in one-letter code: Putative minor fimbrial subunit PmfF (182 aa).

The signal sequence occupies residues 1 to 22 (MKNSIIKSAITCLLLLSPSTFA).

Belongs to the fimbrial protein family.

Its subcellular location is the fimbrium. This chain is Putative minor fimbrial subunit PmfF (pmfF), found in Proteus mirabilis (strain HI4320).